Here is a 558-residue protein sequence, read N- to C-terminus: CTP synthase (558 aa).

The segment at 1–266 is amidoligase domain; sequence MSAKYIFVTG…DRLVMKYLRL (266 aa). S14 lines the CTP pocket. S14 serves as a coordination point for UTP. ATP is bound by residues 15–20 and D72; that span reads SLGKGL. Residues D72 and E140 each contribute to the Mg(2+) site. Residues 147-149, 187-192, and K223 contribute to the CTP site; these read DIE and KTKPTQ. UTP-binding positions include 187–192 and K223; that span reads KTKPTQ. 239-241 is an ATP binding site; it reads KDV. Residues 291–537 form the Glutamine amidotransferase type-1 domain; sequence IIGIIGKYVE…IGASYEHRMK (247 aa). L-glutamine is bound at residue G355. C382 functions as the Nucleophile; for glutamine hydrolysis in the catalytic mechanism. Residues 383–386, E406, and R463 contribute to the L-glutamine site; that span reads LGMQ. Catalysis depends on residues H510 and E512. The segment at 539–558 is disordered; that stretch reads THTKEREEESVFLRPERVGK. Residues 542–558 show a composition bias toward basic and acidic residues; it reads KEREEESVFLRPERVGK.

Belongs to the CTP synthase family. As to quaternary structure, homotetramer.

The catalysed reaction is UTP + L-glutamine + ATP + H2O = CTP + L-glutamate + ADP + phosphate + 2 H(+). It catalyses the reaction L-glutamine + H2O = L-glutamate + NH4(+). The enzyme catalyses UTP + NH4(+) + ATP = CTP + ADP + phosphate + 2 H(+). The protein operates within pyrimidine metabolism; CTP biosynthesis via de novo pathway; CTP from UDP: step 2/2. Allosterically activated by GTP, when glutamine is the substrate; GTP has no effect on the reaction when ammonia is the substrate. The allosteric effector GTP functions by stabilizing the protein conformation that binds the tetrahedral intermediate(s) formed during glutamine hydrolysis. Inhibited by the product CTP, via allosteric rather than competitive inhibition. Its function is as follows. Catalyzes the ATP-dependent amination of UTP to CTP with either L-glutamine or ammonia as the source of nitrogen. Regulates intracellular CTP levels through interactions with the four ribonucleotide triphosphates. In Koribacter versatilis (strain Ellin345), this protein is CTP synthase.